We begin with the raw amino-acid sequence, 376 residues long: MYVRRLELVDFRSYERVGVDLEPGANVLVGHNGVGKTNLIEALGYVATLDSHRVATDAPLVRMGAGAAVIRCAVVHEGRELLIELEIVPGRANRARLGRSPARRARDVLGALRLVLFAPEDLELVRGDPAERRRYLDDLLVLRQPRYAGVRADYERVVRQRNALLRTAYLARKTGGTRGGDLSTLAVWDDHLARHGAELLAGRLDLVAALAPHVTRAYDAVAAGTGAAGIAYRPSVELPTPTTDRADLTAALSAALAAGRSAEIERGTTLVGPHRDDLTLTLGPLPAKGYASHGESWSLALALRLAGYDLLRVDGIEPVLVLDDVFAELDTGRRDRLAQLVGDASQLLVTCAVEEDVPARLRGARFVVRGGEVHRA.

Position 30 to 37 (30 to 37 (GHNGVGKT)) interacts with ATP.

This sequence belongs to the RecF family.

The protein resides in the cytoplasm. In terms of biological role, the RecF protein is involved in DNA metabolism; it is required for DNA replication and normal SOS inducibility. RecF binds preferentially to single-stranded, linear DNA. It also seems to bind ATP. The polypeptide is DNA replication and repair protein RecF (Salinispora arenicola (strain CNS-205)).